A 236-amino-acid polypeptide reads, in one-letter code: 2-C-methyl-D-erythritol 4-phosphate cytidylyltransferase (236 aa).

This sequence belongs to the IspD/TarI cytidylyltransferase family. IspD subfamily. In terms of assembly, homodimer.

The enzyme catalyses 2-C-methyl-D-erythritol 4-phosphate + CTP + H(+) = 4-CDP-2-C-methyl-D-erythritol + diphosphate. Its pathway is isoprenoid biosynthesis; isopentenyl diphosphate biosynthesis via DXP pathway; isopentenyl diphosphate from 1-deoxy-D-xylulose 5-phosphate: step 2/6. Catalyzes the formation of 4-diphosphocytidyl-2-C-methyl-D-erythritol from CTP and 2-C-methyl-D-erythritol 4-phosphate (MEP). The sequence is that of 2-C-methyl-D-erythritol 4-phosphate cytidylyltransferase from Salmonella paratyphi C (strain RKS4594).